Reading from the N-terminus, the 189-residue chain is Phomopsin biosynthesis cluster protein C' (189 aa).

The protein belongs to the oryJ family.

Its function is as follows. Part of the gene cluster that mediates the biosynthesis of the phomopsins, a group of hexapeptide mycotoxins which infects lupins and causes lupinosis disease in livestock. The role of phomC' within the phomopsins biosynthesis pathway has still to be determined. The pathway starts with the processing of the precursor phomA by several endopeptidases including kexin proteases as well as the cluster-specific S41 family peptidase phomP1 and the oligopeptidase phomG to produce 10 identical copies of the hexapeptide Tyr-Val-Ile-Pro-Ile-Asp. After being excised from the precursor peptide, the core peptides are cyclized and modified post-translationally by enzymes encoded within the gene cluster. The timing and order of proteolysis of the phomA precursor and PTMs are still unknown. Two tyrosinase-like enzymes, phomQ1 and phomQ2, catalyze the chlorination and hydroxylation of Tyr, respectively. PhomYb, is proposed to be involved in the construction of the macrocyclic structure. The other 4 ustYa family proteins may be involved in PTMs that generate the unique structure of phomopsin A. PhomYa is required for the hydroxylation of C-beta of Tyr. PhomYc, phomYd, and phomYe are responsible for the biosynthesis of 2,3-dehydroisoleucine (dIle), 2,3-dehydroaspartic acid (dAsp), and 3,4-dehydroproline (dPro), respectively. While dIle formation by phomYc is indispensable for the installation of dAsp by phomYd, the order of the other PTMs have not been elucidated yet. Most of the biosynthetic enzymes likely have broad substrate specificity, and thus, there might be a metabolic grid from a precursor to phomopsin A. The enzyme(s) responsible for the biosynthesis of 3,4-dehydrovaline (dVal) have also not been identified yet. Finally, phomM acts as an S-adenosylmethionine-dependent alpha-N-methyltransferase that catalyzes two successive N-methylation reactions, converting N-desmethyl-phomopsin A to phomopsin A and phomopsin A further to an N,N-dimethylated congener called phomopsin E. This chain is Phomopsin biosynthesis cluster protein C', found in Diaporthe leptostromiformis (Lupinosis disease fungus).